The chain runs to 108 residues: UPF0251 protein PF0620 (108 aa).

This sequence belongs to the UPF0251 family.

In Pyrococcus furiosus (strain ATCC 43587 / DSM 3638 / JCM 8422 / Vc1), this protein is UPF0251 protein PF0620.